Here is a 237-residue protein sequence, read N- to C-terminus: 2,3-bisphosphoglycerate-dependent phosphoglycerate mutase (237 aa).

Substrate contacts are provided by residues 8 to 15 (RHGQSAWN), 21 to 22 (TG), R60, 87 to 90 (ERHY), K98, 114 to 115 (RR), and 180 to 181 (GN). Residue H9 is the Tele-phosphohistidine intermediate of the active site. The Proton donor/acceptor role is filled by E87.

Belongs to the phosphoglycerate mutase family. BPG-dependent PGAM subfamily. Homodimer.

It carries out the reaction (2R)-2-phosphoglycerate = (2R)-3-phosphoglycerate. It participates in carbohydrate degradation; glycolysis; pyruvate from D-glyceraldehyde 3-phosphate: step 3/5. Catalyzes the interconversion of 2-phosphoglycerate and 3-phosphoglycerate. In Hyphomonas neptunium (strain ATCC 15444), this protein is 2,3-bisphosphoglycerate-dependent phosphoglycerate mutase.